Consider the following 332-residue polypeptide: UDP-N-acetylenolpyruvoylglucosamine reductase (332 aa).

The FAD-binding PCMH-type domain occupies 45-243 (RAGGHAAYFY…LGTRIKTQPL (199 aa)). R194 is an active-site residue. Catalysis depends on S250, which acts as the Proton donor. E320 is an active-site residue.

The protein belongs to the MurB family. FAD serves as cofactor.

It localises to the cytoplasm. The enzyme catalyses UDP-N-acetyl-alpha-D-muramate + NADP(+) = UDP-N-acetyl-3-O-(1-carboxyvinyl)-alpha-D-glucosamine + NADPH + H(+). Its pathway is cell wall biogenesis; peptidoglycan biosynthesis. In terms of biological role, cell wall formation. In Nitrosomonas eutropha (strain DSM 101675 / C91 / Nm57), this protein is UDP-N-acetylenolpyruvoylglucosamine reductase.